A 149-amino-acid polypeptide reads, in one-letter code: Putative prefoldin subunit alpha (149 aa).

This sequence belongs to the prefoldin subunit alpha family.

It localises to the cytoplasm. Its function is as follows. Molecular chaperone capable of stabilizing a range of proteins. The sequence is that of Putative prefoldin subunit alpha from Aquifex aeolicus (strain VF5).